The chain runs to 334 residues: Beta-hexosaminidase (334 aa).

Residues Asp60, Arg68, Arg133, and 163–164 each bind substrate; that span reads KH. Residue His176 is the Proton donor/acceptor of the active site. Catalysis depends on Asp247, which acts as the Nucleophile.

Belongs to the glycosyl hydrolase 3 family. NagZ subfamily.

It is found in the cytoplasm. The catalysed reaction is Hydrolysis of terminal non-reducing N-acetyl-D-hexosamine residues in N-acetyl-beta-D-hexosaminides.. The protein operates within cell wall biogenesis; peptidoglycan recycling. In terms of biological role, plays a role in peptidoglycan recycling by cleaving the terminal beta-1,4-linked N-acetylglucosamine (GlcNAc) from peptide-linked peptidoglycan fragments, giving rise to free GlcNAc, anhydro-N-acetylmuramic acid and anhydro-N-acetylmuramic acid-linked peptides. The sequence is that of Beta-hexosaminidase from Xanthomonas axonopodis pv. citri (strain 306).